The following is a 397-amino-acid chain: Tauropine dehydrogenase (397 aa).

This sequence belongs to the lysopine/nopaline/octopine/opine/vitopine dehydrogenases family.

The enzyme catalyses tauropine + NAD(+) + H2O = taurine + pyruvate + NADH + H(+). With respect to regulation, subject to substrate inhibition by pyruvate for the reverse reaction but not for the forward reaction of the tauropine dehydrogenase activity. In terms of biological role, may play a role in maintaining a redox balance during environmental and functional hypoxia. Exhibits high specificity for taurine and in addition, requires both alpha amino group and C-2 carbon chain length as a critical factor for active site binding of the amino acid. A methyl group in the beta position may be critical for active site binding of the keto acid. In the reverse reaction requires NAD(H) for the activity but not NADP(H). The sequence is that of Tauropine dehydrogenase from Arabella iricolor (Opal worm).